Here is a 402-residue protein sequence, read N- to C-terminus: Phosphoglycerate kinase (402 aa).

Substrate is bound by residues 21–23 (DFN), R36, 59–62 (HLGR), R118, and R151. Residues K201, G293, E324, and 353–356 (GGDS) each bind ATP.

This sequence belongs to the phosphoglycerate kinase family. Monomer.

It is found in the cytoplasm. It catalyses the reaction (2R)-3-phosphoglycerate + ATP = (2R)-3-phospho-glyceroyl phosphate + ADP. Its pathway is carbohydrate degradation; glycolysis; pyruvate from D-glyceraldehyde 3-phosphate: step 2/5. The chain is Phosphoglycerate kinase from Thermosipho africanus (strain TCF52B).